Reading from the N-terminus, the 366-residue chain is UDP-N-acetylglucosamine--N-acetylmuramyl-(pentapeptide) pyrophosphoryl-undecaprenol N-acetylglucosamine transferase (366 aa).

UDP-N-acetyl-alpha-D-glucosamine contacts are provided by residues 14–16 (TGG), asparagine 125, arginine 168, serine 196, and glutamine 297.

This sequence belongs to the glycosyltransferase 28 family. MurG subfamily.

Its subcellular location is the cell inner membrane. The enzyme catalyses di-trans,octa-cis-undecaprenyl diphospho-N-acetyl-alpha-D-muramoyl-L-alanyl-D-glutamyl-meso-2,6-diaminopimeloyl-D-alanyl-D-alanine + UDP-N-acetyl-alpha-D-glucosamine = di-trans,octa-cis-undecaprenyl diphospho-[N-acetyl-alpha-D-glucosaminyl-(1-&gt;4)]-N-acetyl-alpha-D-muramoyl-L-alanyl-D-glutamyl-meso-2,6-diaminopimeloyl-D-alanyl-D-alanine + UDP + H(+). The protein operates within cell wall biogenesis; peptidoglycan biosynthesis. Its function is as follows. Cell wall formation. Catalyzes the transfer of a GlcNAc subunit on undecaprenyl-pyrophosphoryl-MurNAc-pentapeptide (lipid intermediate I) to form undecaprenyl-pyrophosphoryl-MurNAc-(pentapeptide)GlcNAc (lipid intermediate II). The chain is UDP-N-acetylglucosamine--N-acetylmuramyl-(pentapeptide) pyrophosphoryl-undecaprenol N-acetylglucosamine transferase from Bradyrhizobium diazoefficiens (strain JCM 10833 / BCRC 13528 / IAM 13628 / NBRC 14792 / USDA 110).